The primary structure comprises 379 residues: Diaminopimelate decarboxylase (379 aa).

K48 carries the post-translational modification N6-(pyridoxal phosphate)lysine. Residues G214 and 242 to 245 each bind pyridoxal 5'-phosphate; that span reads EPGR. Substrate-binding residues include R245, R280, and Y284. C309 functions as the Proton donor in the catalytic mechanism. 2 residues coordinate substrate: E310 and Y338. Y338 is a binding site for pyridoxal 5'-phosphate.

This sequence belongs to the Orn/Lys/Arg decarboxylase class-II family. LysA subfamily. In terms of assembly, homodimer. The cofactor is pyridoxal 5'-phosphate.

It carries out the reaction meso-2,6-diaminopimelate + H(+) = L-lysine + CO2. The protein operates within amino-acid biosynthesis; L-lysine biosynthesis via DAP pathway; L-lysine from DL-2,6-diaminopimelate: step 1/1. Specifically catalyzes the decarboxylation of meso-diaminopimelate (meso-DAP) to L-lysine. This Deinococcus radiodurans (strain ATCC 13939 / DSM 20539 / JCM 16871 / CCUG 27074 / LMG 4051 / NBRC 15346 / NCIMB 9279 / VKM B-1422 / R1) protein is Diaminopimelate decarboxylase.